The sequence spans 88 residues: uncharacterized protein (88 aa).

2 consecutive transmembrane segments (helical) span residues 5-25 and 36-56; these read AIPF…LLFV and CYYL…VMIF.

The protein resides in the membrane. This is an uncharacterized protein from Saccharomyces cerevisiae (strain ATCC 204508 / S288c) (Baker's yeast).